Consider the following 262-residue polypeptide: 5-methyltetrahydrofolate:corrinoid/iron-sulfur protein co-methyltransferase (262 aa).

Positions 1-246 (MLIIGERING…ETAATAEILL (246 aa)) constitute a Pterin-binding domain. Residues Asn96 and Asp160 each contribute to the (6S)-5-methyl-5,6,7,8-tetrahydrofolate site. Lys184 contacts Ca(2+). (6S)-5-methyl-5,6,7,8-tetrahydrofolate-binding residues include Asn199, Gln202, and Arg207. 202-203 (QN) contributes to the methylcob(III)alamin binding site. Gly222 and Asp224 together coordinate Ca(2+).

It belongs to the vitamin-B12 dependent methionine synthase family. Heterohexamer composed of 2 subunits of AcsC, 2 subunits of AcsD and 2 subunits of AcsE. Ca(2+) serves as cofactor.

It catalyses the reaction methyl-Co(III)-[corrinoid Fe-S protein] + (6S)-5,6,7,8-tetrahydrofolate = Co(I)-[corrinoid Fe-S protein] + (6S)-5-methyl-5,6,7,8-tetrahydrofolate + H(+). In terms of biological role, methyltransferase that mediates the transfer of a N5-methyl group of (6S)-methyltetrahydrofolate to the 5-methoxybenzimidazolylcobamide cofactor of a corrinoid/Fe-S protein (AcsC/AcsD) in the anaerobic acetyl-CoA pathway (Wood-Ljungdahl pathway) of carbon monoxide and carbon dioxide fixation. The polypeptide is 5-methyltetrahydrofolate:corrinoid/iron-sulfur protein co-methyltransferase (acsE) (Moorella thermoacetica (Clostridium thermoaceticum)).